The sequence spans 362 residues: sn-glycerol-3-phosphate import ATP-binding protein UgpC (362 aa).

One can recognise an ABC transporter domain in the interval 4–235; it reads LSFRNVKKTY…PASTFVAGFI (232 aa). 37–44 serves as a coordination point for ATP; that stretch reads GPSGCGKS.

It belongs to the ABC transporter superfamily. sn-glycerol-3-phosphate importer (TC 3.A.1.1.3) family. As to quaternary structure, the complex is composed of two ATP-binding proteins (UgpC), two transmembrane proteins (UgpA and UgpE) and a solute-binding protein (UgpB).

It is found in the cell inner membrane. The enzyme catalyses sn-glycerol 3-phosphate(out) + ATP + H2O = sn-glycerol 3-phosphate(in) + ADP + phosphate + H(+). Functionally, part of the ABC transporter complex UgpBAEC involved in sn-glycerol-3-phosphate (G3P) import. Responsible for energy coupling to the transport system. The sequence is that of sn-glycerol-3-phosphate import ATP-binding protein UgpC from Bordetella pertussis (strain Tohama I / ATCC BAA-589 / NCTC 13251).